The sequence spans 57 residues: Putative secreted protein MT0250 (57 aa).

An N-terminal signal peptide occupies residues 1–32 (MNRIVAPAAASVVVGLLLGAAAIFGVTLMVQQ). The tract at residues 34 to 57 (KKPPLPGGDPSSSVLNRVEYGNRS) is disordered.

In Mycobacterium tuberculosis (strain CDC 1551 / Oshkosh), this protein is Putative secreted protein MT0250.